Consider the following 68-residue polypeptide: uncharacterized protein (68 aa).

This is an uncharacterized protein from Caenorhabditis elegans.